A 100-amino-acid chain; its full sequence is Urease subunit gamma (100 aa).

This sequence belongs to the urease gamma subunit family. In terms of assembly, heterotrimer of UreA (gamma), UreB (beta) and UreC (alpha) subunits. Three heterotrimers associate to form the active enzyme.

It localises to the cytoplasm. It catalyses the reaction urea + 2 H2O + H(+) = hydrogencarbonate + 2 NH4(+). It functions in the pathway nitrogen metabolism; urea degradation; CO(2) and NH(3) from urea (urease route): step 1/1. The polypeptide is Urease subunit gamma (Variovorax paradoxus (strain S110)).